A 468-amino-acid polypeptide reads, in one-letter code: Tyramine receptor tyra-2 (468 aa).

At 1-23 the chain is on the extracellular side; sequence MMSSYVMSPVDETYTLFQILKGS. Residues 24-43 traverse the membrane as a helical segment; it reads ALFLLVLWTIFANSLVFIVL. Over 44–54 the chain is Cytoplasmic; that stretch reads YKNPRLQTVPN. A helical membrane pass occupies residues 55–77; sequence LLVGNLAFSDLALGLIVLPLSSV. Over 78–91 the chain is Extracellular; sequence YAIAGEWVFPDALC. The cysteines at positions 91 and 177 are disulfide-linked. The helical transmembrane segment at 92 to 114 threads the bilayer; the sequence is EVFVSADILCSTASIWNLSIVGL. The Cytoplasmic portion of the chain corresponds to 115–134; the sequence is DRYWAITSPVAYMSKRNKRT. A helical membrane pass occupies residues 135–157; sequence AGIMILSVWISSALISLAPLLGW. Over 158-186 the chain is Extracellular; sequence KQTAQTPNLIYEKNNTVRQCTFLDLPSYT. A glycan (N-linked (GlcNAc...) asparagine) is linked at Asn-171. The helical transmembrane segment at 187–209 threads the bilayer; sequence VYSATGSFFIPTLLMFFVYFKIY. Topologically, residues 210-387 are cytoplasmic; it reads QAFAKHRARQ…SAAKERRGVK (178 aa). The segment at 252–306 is disordered; it reads DEFAKEEEEEEDSESSGQVENGLGNGNDAIIEEDECEDEDSDEKRDDHTSMTTVT. Acidic residues-rich tracts occupy residues 255–265 and 281–292; these read AKEEEEEEDSE and IIEEDECEDEDS. A helical transmembrane segment spans residues 388-410; that stretch reads VLGIILGCFTVCWAPFFTMYVLV. The Extracellular portion of the chain corresponds to 411-424; that stretch reads QFCKDCSPNAHIEM. Residues 425-444 form a helical membrane-spanning segment; the sequence is FITWLGYSNSAMNPIIYTVF. Topologically, residues 445-468 are cytoplasmic; that stretch reads NRDYQIALKRLFTSEKKPSSTSRV.

This sequence belongs to the G-protein coupled receptor 1 family. In terms of tissue distribution, expressed in the pharyngeal neurons, MCL/R and NSML/R and the AS group of amphidial sensory neurons, ASEL/R, AGSL/R, ASHL/R and ASIL/R.

The protein localises to the cell membrane. Its function is as follows. G-protein coupled receptor for tyramine, a known neurotransmitter and neuromodulator and direct precursor of octopamine. Expression in amphidial sensory neurons suggests a role in chemosensation. In Caenorhabditis elegans, this protein is Tyramine receptor tyra-2 (tyra-2).